The following is a 535-amino-acid chain: Nuclear/nucleolar GTPase 2 (535 aa).

The disordered stretch occupies residues 1–42 (MAKKKERAVNVSGKPRHSLDVNRANDKKGAGGGAGGGGGGRS). Over residues 17-29 (HSLDVNRANDKKG) the composition is skewed to basic and acidic residues. Residues 30 to 41 (AGGGAGGGGGGR) show a composition bias toward gly residues. The 162-residue stretch at 213–374 (WGELYKVIDS…LIDCPGVVYQ (162 aa)) folds into the CP-type G domain. The segment at 261–264 (NKCD) is G4. Positions 290-292 (SIN) are G5. Residues 323-330 (GYPNVGKS) are G1. The tract at residues 349–353 (GETKV) is G2. Positions 367-370 (DCPG) are G3. The disordered stretch occupies residues 464 to 494 (FFVPPPQQGEDSPSETAEPVEKSDEEGVSSD).

It belongs to the TRAFAC class YlqF/YawG GTPase family. RsgA subfamily. As to quaternary structure, interacts (via N-terminus) with the 60S ribosomal proteins RPL10A. This interaction is enhanced by the addition of GTP. Expressed in roots, shoot apical meristem, leaves, leaf sheaths and flowers.

Its subcellular location is the nucleus. It is found in the nucleolus. With respect to regulation, the GTPase activity is stimulated in the presence of ribosomes, particularly of the 60S subunit. In terms of biological role, GTPase involved in pre-60S ribosomal subunit maturation. The polypeptide is Nuclear/nucleolar GTPase 2 (Oryza sativa subsp. japonica (Rice)).